The chain runs to 147 residues: MAIERTLSIIKPDGVEKGIIGKIIGRFEEKGLKPVAIRLTQLSKAEAEGFYAVHKARPFFGDLVKFMTSGPVVLMVLEGENAVARNREIMGATDPKKADAGTIRKDFATDIEKNTVHGSDSVENAKIEVSYFFPEVQVHAYEWKKLA.

ATP contacts are provided by K11, F59, R87, T93, R104, and N114. The Pros-phosphohistidine intermediate role is filled by H117.

Belongs to the NDK family. As to quaternary structure, homotetramer. It depends on Mg(2+) as a cofactor.

Its subcellular location is the cytoplasm. The catalysed reaction is a 2'-deoxyribonucleoside 5'-diphosphate + ATP = a 2'-deoxyribonucleoside 5'-triphosphate + ADP. It catalyses the reaction a ribonucleoside 5'-diphosphate + ATP = a ribonucleoside 5'-triphosphate + ADP. In terms of biological role, major role in the synthesis of nucleoside triphosphates other than ATP. The ATP gamma phosphate is transferred to the NDP beta phosphate via a ping-pong mechanism, using a phosphorylated active-site intermediate. This chain is Nucleoside diphosphate kinase, found in Anaeromyxobacter dehalogenans (strain 2CP-1 / ATCC BAA-258).